Here is a 510-residue protein sequence, read N- to C-terminus: NAD(P)H-quinone oxidoreductase subunit 2 A, chloroplastic (510 aa).

Transmembrane regions (helical) follow at residues 31 to 51 (FIFPECILIFGLILLLMIDLT), 57 to 77 (TPWLYFISSTSLVMSITALLF), 99 to 119 (IFQFLILLCSTLCIPLSVEYI), 124 to 144 (MAITEFLLFVLTATLGGMFLC), 149 to 169 (LITIFVAPECFSLCSYLLSGY), 183 to 203 (YLLMGGASSSILVYGFSWLYG), 229 to 249 (ISIALISITVGIGFKLSPAPF), 295 to 315 (WHLLLEILAILSMILGNLIAI), 323 to 343 (MLAYSSIGQIGYVIIGIIVGD), 354 to 374 (YMLFYIAMNLGTFACIVLFGL), 395 to 415 (ALSSALCLLSLGGIPPLAGFF), 418 to 438 (LYLFWCGWQAGLYFLVSIGLL), and 484 to 504 (MIVCVIASTIPGISMNPIIAI).

It belongs to the complex I subunit 2 family. NDH is composed of at least 16 different subunits, 5 of which are encoded in the nucleus.

It is found in the plastid. The protein localises to the chloroplast thylakoid membrane. It catalyses the reaction a plastoquinone + NADH + (n+1) H(+)(in) = a plastoquinol + NAD(+) + n H(+)(out). The catalysed reaction is a plastoquinone + NADPH + (n+1) H(+)(in) = a plastoquinol + NADP(+) + n H(+)(out). In terms of biological role, NDH shuttles electrons from NAD(P)H:plastoquinone, via FMN and iron-sulfur (Fe-S) centers, to quinones in the photosynthetic chain and possibly in a chloroplast respiratory chain. The immediate electron acceptor for the enzyme in this species is believed to be plastoquinone. Couples the redox reaction to proton translocation, and thus conserves the redox energy in a proton gradient. The chain is NAD(P)H-quinone oxidoreductase subunit 2 A, chloroplastic from Nymphaea alba (White water-lily).